Reading from the N-terminus, the 671-residue chain is Anti-sigma-I factor RsgI2 (671 aa).

The Cytoplasmic segment spans residues 1–57 (MSHYTGIILKLESDRAIVLTDGLDFMELKLKPGMQRGQHVIFDESDLYSAGLITRYK). The RsgI N-terminal anti-sigma domain maps to 4 to 51 (YTGIILKLESDRAIVLTDGLDFMELKLKPGMQRGQHVIFDESDLYSAG). The chain crosses the membrane as a helical span at residues 58-78 (SIIMPFSAFAAAAAVFLVILF). Residues 79–671 (SLRFVSISQE…SGTLYWGIEP (593 aa)) are Extracellular-facing. Disordered stretches follow at residues 290 to 323 (TEAQ…IPHT) and 359 to 505 (PVPV…APTE). The segment covering 359–379 (PVPVSTPKPVSTPAYSSTPTP) has biased composition (low complexity). The segment covering 380–400 (ESTPVPVSTPKPASTPTPAST) has biased composition (pro residues). Residues 401-425 (PKPVSTPTHVSTPKPISTPTSTPRP) show a composition bias toward low complexity. Positions 426–446 (ASTPKPTSTPTPESTPKPTST) are enriched in pro residues. The segment covering 447–491 (PAPVSTPTSTPIPTYTSTPASTPIPAYTSTPTSIPTLTPATSPAP) has biased composition (low complexity). Pro residues predominate over residues 492–502 (TSSPTPIPSPA). One can recognise a CBM3 domain in the interval 508–671 (LLTKIELQAY…SGTLYWGIEP (164 aa)). Ca(2+) contacts are provided by Thr554, Asp556, Asp637, Ser640, and Asp641.

In terms of assembly, interacts (via RsgI N-terminal anti-sigma domain) with SigI2.

The protein resides in the cell membrane. In terms of biological role, anti-sigma factor for SigI2. Negatively regulates SigI2 activity through direct interaction. Binding of the polysaccharide substrate to the extracellular C-terminal sensing domain of RsgI2 may induce a conformational change in its N-terminal cytoplasmic region, leading to the release and activation of SigI2. The sequence is that of Anti-sigma-I factor RsgI2 from Acetivibrio thermocellus (strain ATCC 27405 / DSM 1237 / JCM 9322 / NBRC 103400 / NCIMB 10682 / NRRL B-4536 / VPI 7372) (Clostridium thermocellum).